Consider the following 427-residue polypeptide: Phosphatidylglycerol--prolipoprotein diacylglyceryl transferase (427 aa).

4 helical membrane passes run 21-41, 53-73, 96-116, and 122-142; these read VPIRAYALFIIAGIVAALLIG, GVIYDIALWTVPFGLVGGRLY, IWDGGLGIWGAVALGAVGAWI, and GIPLPAFADALAPGIILAQAI. Residue Arg144 coordinates a 1,2-diacyl-sn-glycero-3-phospho-(1'-sn-glycerol). The next 2 membrane-spanning stretches (helical) occupy residues 189 to 209 and 256 to 276; these read VALVVQPTFLYELLWNLLIFV and INSFTSTFVFIGAVVYLMAAP. Residues 280–427 form a disordered region; that stretch reads EDPESLRGNQ…ARLRERLSGR (148 aa). Low complexity predominate over residues 299–330; it reads EPATVAATTEAATEGVAAPADGAEAAGADATA. A compositionally biased stretch (basic and acidic residues) spans 332-346; that stretch reads RPEESAEPDVEKPES. Acidic residues predominate over residues 347-404; it reads EETEAAEEASEPEAEEPEAPEAEEPEEPETEEPEADSGEEPEEESGEAPEQLVAEEPE. Residues 411–427 show a composition bias toward basic and acidic residues; sequence ETKRRWGARLRERLSGR.

This sequence belongs to the Lgt family.

It is found in the cell membrane. It catalyses the reaction L-cysteinyl-[prolipoprotein] + a 1,2-diacyl-sn-glycero-3-phospho-(1'-sn-glycerol) = an S-1,2-diacyl-sn-glyceryl-L-cysteinyl-[prolipoprotein] + sn-glycerol 1-phosphate + H(+). It functions in the pathway protein modification; lipoprotein biosynthesis (diacylglyceryl transfer). Catalyzes the transfer of the diacylglyceryl group from phosphatidylglycerol to the sulfhydryl group of the N-terminal cysteine of a prolipoprotein, the first step in the formation of mature lipoproteins. This Mycolicibacterium paratuberculosis (strain ATCC BAA-968 / K-10) (Mycobacterium paratuberculosis) protein is Phosphatidylglycerol--prolipoprotein diacylglyceryl transferase.